The primary structure comprises 110 residues: Nucleoid-associated protein Sfum_2790 (110 aa).

It belongs to the YbaB/EbfC family. In terms of assembly, homodimer.

It localises to the cytoplasm. Its subcellular location is the nucleoid. Binds to DNA and alters its conformation. May be involved in regulation of gene expression, nucleoid organization and DNA protection. This chain is Nucleoid-associated protein Sfum_2790, found in Syntrophobacter fumaroxidans (strain DSM 10017 / MPOB).